The chain runs to 399 residues: Imidazolonepropionase (399 aa).

Positions 74 and 76 each coordinate Fe(3+). Residues His74 and His76 each coordinate Zn(2+). 3 residues coordinate 4-imidazolone-5-propanoate: Arg83, Tyr146, and His176. Tyr146 serves as a coordination point for N-formimidoyl-L-glutamate. His238 is a binding site for Fe(3+). Zn(2+) is bound at residue His238. Gln241 lines the 4-imidazolone-5-propanoate pocket. Asp312 is a Fe(3+) binding site. Residue Asp312 coordinates Zn(2+). Positions 314 and 316 each coordinate N-formimidoyl-L-glutamate. Ser317 is a binding site for 4-imidazolone-5-propanoate.

Belongs to the metallo-dependent hydrolases superfamily. HutI family. The cofactor is Zn(2+). Fe(3+) serves as cofactor.

It is found in the cytoplasm. The enzyme catalyses 4-imidazolone-5-propanoate + H2O = N-formimidoyl-L-glutamate. It participates in amino-acid degradation; L-histidine degradation into L-glutamate; N-formimidoyl-L-glutamate from L-histidine: step 3/3. Catalyzes the hydrolytic cleavage of the carbon-nitrogen bond in imidazolone-5-propanoate to yield N-formimidoyl-L-glutamate. It is the third step in the universal histidine degradation pathway. The protein is Imidazolonepropionase of Deinococcus deserti (strain DSM 17065 / CIP 109153 / LMG 22923 / VCD115).